The sequence spans 265 residues: Translation initiation factor 2 subunit alpha (265 aa).

The S1 motif domain maps to 12–82; the sequence is GELVIGTVKK…KMRVVEVSLK (71 aa).

Belongs to the eIF-2-alpha family. As to quaternary structure, heterotrimer composed of an alpha, a beta and a gamma chain.

EIF-2 functions in the early steps of protein synthesis by forming a ternary complex with GTP and initiator tRNA. The protein is Translation initiation factor 2 subunit alpha of Pyrobaculum aerophilum (strain ATCC 51768 / DSM 7523 / JCM 9630 / CIP 104966 / NBRC 100827 / IM2).